Consider the following 286-residue polypeptide: Phosphatidylserine decarboxylase proenzyme (286 aa).

Catalysis depends on charge relay system; for autoendoproteolytic cleavage activity residues D90, H147, and S252. Residue S252 is the Schiff-base intermediate with substrate; via pyruvic acid; for decarboxylase activity of the active site. Position 252 is a pyruvic acid (Ser); by autocatalysis (S252).

Belongs to the phosphatidylserine decarboxylase family. PSD-B subfamily. Prokaryotic type I sub-subfamily. As to quaternary structure, heterodimer of a large membrane-associated beta subunit and a small pyruvoyl-containing alpha subunit. Pyruvate is required as a cofactor. In terms of processing, is synthesized initially as an inactive proenzyme. Formation of the active enzyme involves a self-maturation process in which the active site pyruvoyl group is generated from an internal serine residue via an autocatalytic post-translational modification. Two non-identical subunits are generated from the proenzyme in this reaction, and the pyruvate is formed at the N-terminus of the alpha chain, which is derived from the carboxyl end of the proenzyme. The autoendoproteolytic cleavage occurs by a canonical serine protease mechanism, in which the side chain hydroxyl group of the serine supplies its oxygen atom to form the C-terminus of the beta chain, while the remainder of the serine residue undergoes an oxidative deamination to produce ammonia and the pyruvoyl prosthetic group on the alpha chain. During this reaction, the Ser that is part of the protease active site of the proenzyme becomes the pyruvoyl prosthetic group, which constitutes an essential element of the active site of the mature decarboxylase.

It localises to the cell membrane. It catalyses the reaction a 1,2-diacyl-sn-glycero-3-phospho-L-serine + H(+) = a 1,2-diacyl-sn-glycero-3-phosphoethanolamine + CO2. It participates in phospholipid metabolism; phosphatidylethanolamine biosynthesis; phosphatidylethanolamine from CDP-diacylglycerol: step 2/2. Functionally, catalyzes the formation of phosphatidylethanolamine (PtdEtn) from phosphatidylserine (PtdSer). This is Phosphatidylserine decarboxylase proenzyme from Pseudomonas fluorescens (strain SBW25).